A 543-amino-acid polypeptide reads, in one-letter code: MKQTKYIFVTGGVLSSLGKGIAAASIATLLKNSGLKVSILKADPYINVDPGTMSPFEHGEVFVTDDGAETDLDLGHYERFLDESLSQDNNFTTGRVYQSVIEKERRGEYLGKTIQVIPHIVGEIKDRIKKAGEGKDILIVEIGGTVGDIEGLPFLEAIRALRLEVGKNNAMNIHLTLVPFIKAAGELKTKPTQHSVGELRRIGISPDMIICRSEKALDRDLKDKIAISCGVEKNCVIESVDAASIYQIPLNFLKQDILSPIAEILDLKNLKPNMENWDSLVKRVIAPSNEVKIAFVGKYVDLKESYKSLTEAIIHAGAALDTKVELKWVDSEKLENMESAEVFKDVSGILVAGGFGYRGVEGKIKAIQYARENKIPFLGICLGMQLALVEFARNVLKLKDANSSEFDEKCQNPVVYLIDEFMDTNGEKQIRTAKTPLGGTMRLGAYKCDIKEKSLLAKVYNEAKSVKERHRHRYEANPKYRVDFEKHGLIVSGESKGLIEAVELNCHPFFLAVQFHPEFTSRLEHVNPVICGFIKAAINYEDN.

Residues 1–267 (MKQTKYIFVT…LSPIAEILDL (267 aa)) are amidoligase domain. Serine 15 lines the CTP pocket. Residue serine 15 participates in UTP binding. Residues 16–21 (SLGKGI) and aspartate 73 each bind ATP. Mg(2+) is bound by residues aspartate 73 and glutamate 141. Residues 148 to 150 (DIE), 188 to 193 (KTKPTQ), and lysine 224 contribute to the CTP site. UTP is bound by residues 188–193 (KTKPTQ) and lysine 224. Positions 292–543 (KIAFVGKYVD…IKAAINYEDN (252 aa)) constitute a Glutamine amidotransferase type-1 domain. Glycine 354 contributes to the L-glutamine binding site. Residue cysteine 381 is the Nucleophile; for glutamine hydrolysis of the active site. Residues 382–385 (LGMQ), glutamate 405, and arginine 473 contribute to the L-glutamine site. Catalysis depends on residues histidine 516 and glutamate 518.

This sequence belongs to the CTP synthase family. Homotetramer.

It carries out the reaction UTP + L-glutamine + ATP + H2O = CTP + L-glutamate + ADP + phosphate + 2 H(+). It catalyses the reaction L-glutamine + H2O = L-glutamate + NH4(+). The enzyme catalyses UTP + NH4(+) + ATP = CTP + ADP + phosphate + 2 H(+). It participates in pyrimidine metabolism; CTP biosynthesis via de novo pathway; CTP from UDP: step 2/2. Its activity is regulated as follows. Allosterically activated by GTP, when glutamine is the substrate; GTP has no effect on the reaction when ammonia is the substrate. The allosteric effector GTP functions by stabilizing the protein conformation that binds the tetrahedral intermediate(s) formed during glutamine hydrolysis. Inhibited by the product CTP, via allosteric rather than competitive inhibition. Functionally, catalyzes the ATP-dependent amination of UTP to CTP with either L-glutamine or ammonia as the source of nitrogen. Regulates intracellular CTP levels through interactions with the four ribonucleotide triphosphates. This Campylobacter jejuni subsp. jejuni serotype O:6 (strain 81116 / NCTC 11828) protein is CTP synthase.